The sequence spans 489 residues: Rhamnulokinase (489 aa).

Residue 13–17 participates in ATP binding; that stretch reads ASSGR. A disulfide bond links C68 and C222. Residues G83 and 236–238 each bind substrate; that span reads HDT. D237 functions as the Proton acceptor in the catalytic mechanism. T259 is an ATP binding site. A substrate-binding site is contributed by N296. Q304 contacts ATP. C353 and C370 form a disulfide bridge. G402 lines the ATP pocket. C413 and C417 are joined by a disulfide.

It belongs to the rhamnulokinase family. As to quaternary structure, monomer. Requires Mg(2+) as cofactor.

The catalysed reaction is L-rhamnulose + ATP = L-rhamnulose 1-phosphate + ADP + H(+). It participates in carbohydrate degradation; L-rhamnose degradation; glycerone phosphate from L-rhamnose: step 2/3. Involved in the catabolism of L-rhamnose (6-deoxy-L-mannose). Catalyzes the transfer of the gamma-phosphate group from ATP to the 1-hydroxyl group of L-rhamnulose to yield L-rhamnulose 1-phosphate. The protein is Rhamnulokinase of Escherichia coli (strain 55989 / EAEC).